A 454-amino-acid polypeptide reads, in one-letter code: Oxygen-dependent coproporphyrinogen-III oxidase, mitochondrial (454 aa).

Residues 1–110 (MALQLGRLSS…MLPKTSGTRA (110 aa)) constitute a mitochondrion transit peptide. Residues 43–70 (AAGRVCRPPGPAGTEQSRGLGHGSTSRG) are disordered. Ser112 carries the post-translational modification Phosphoserine. The interval 193-202 (VLQDGCVFEK) is important for dimerization. Ser244 contributes to the coproporphyrinogen III binding site. The active-site Proton donor is His258. 260–262 (NYR) contacts coproporphyrinogen III. The tract at residues 392–428 (YVEFNLLYDRGTKFGLFTPGSRIESILMSLPLTARWE) is important for dimerization. Lys404 carries the post-translational modification N6-acetyllysine; alternate. The residue at position 404 (Lys404) is an N6-succinyllysine; alternate. 411-413 (GSR) serves as a coordination point for coproporphyrinogen III.

This sequence belongs to the aerobic coproporphyrinogen-III oxidase family. As to quaternary structure, homodimer.

Its subcellular location is the mitochondrion intermembrane space. It catalyses the reaction coproporphyrinogen III + O2 + 2 H(+) = protoporphyrinogen IX + 2 CO2 + 2 H2O. It functions in the pathway porphyrin-containing compound metabolism; protoporphyrin-IX biosynthesis; protoporphyrinogen-IX from coproporphyrinogen-III (O2 route): step 1/1. Its function is as follows. Catalyzes the aerobic oxidative decarboxylation of propionate groups of rings A and B of coproporphyrinogen-III to yield the vinyl groups in protoporphyrinogen-IX and participates to the sixth step in the heme biosynthetic pathway. The chain is Oxygen-dependent coproporphyrinogen-III oxidase, mitochondrial from Homo sapiens (Human).